The following is a 139-amino-acid chain: Putative pre-16S rRNA nuclease (139 aa).

Belongs to the YqgF nuclease family.

Its subcellular location is the cytoplasm. Functionally, could be a nuclease involved in processing of the 5'-end of pre-16S rRNA. This is Putative pre-16S rRNA nuclease from Caldanaerobacter subterraneus subsp. tengcongensis (strain DSM 15242 / JCM 11007 / NBRC 100824 / MB4) (Thermoanaerobacter tengcongensis).